A 304-amino-acid polypeptide reads, in one-letter code: Oxygen-dependent coproporphyrinogen-III oxidase (304 aa).

Substrate is bound at residue Ser95. His99 and His109 together coordinate a divalent metal cation. The active-site Proton donor is the His109. Substrate is bound at residue 111-113 (NVR). Residues His148 and His178 each contribute to the a divalent metal cation site. Positions 243–278 (YVEFNLVYDRGTLFGLQSGGRTESILMSLPPLVRWR) are important for dimerization. 261–263 (GGR) lines the substrate pocket.

This sequence belongs to the aerobic coproporphyrinogen-III oxidase family. Homodimer. It depends on a divalent metal cation as a cofactor.

It is found in the cytoplasm. It carries out the reaction coproporphyrinogen III + O2 + 2 H(+) = protoporphyrinogen IX + 2 CO2 + 2 H2O. The protein operates within porphyrin-containing compound metabolism; protoporphyrin-IX biosynthesis; protoporphyrinogen-IX from coproporphyrinogen-III (O2 route): step 1/1. Involved in the heme biosynthesis. Catalyzes the aerobic oxidative decarboxylation of propionate groups of rings A and B of coproporphyrinogen-III to yield the vinyl groups in protoporphyrinogen-IX. In Thioalkalivibrio sulfidiphilus (strain HL-EbGR7), this protein is Oxygen-dependent coproporphyrinogen-III oxidase.